The primary structure comprises 428 residues: MELRAVRGMNDILPEEVERWHKLEGAFRLHAELHGYAEVRTPLLEPTELFRHQMGETTDVVEKEMYSFERHGDHLTVRPEGTAGAARAYVEHAVHAKEPVTRWYYLGPMFRGERPAKGRYRQFYQAGCELFGDPGPLCDAETIDLVAGFLQRIGVGEFVVHVNSLGSAGTRERYREALLAHYTPRKAELSEDSQRRLEKNPLRILDSKDQRDHEVSRDAPSILDLLDDADRAHWDGVRRCLDVLGVNYVVDRSLVRGLDYYTRTLFEVKATAGDLGAQSTLAGGGRYDAMVAGLGGPSVPAIGFAMGMERLLTMMPGASPRRRPGCFLAPLGQSGADQALVLAKQLRALGVPVELDGRGGRLKAMLRRADSLGARLCVILGDAEIERGVLQIKDLVAHVQEEIPLEGAARVLADRALEAPPGGQRGAR.

It belongs to the class-II aminoacyl-tRNA synthetase family. Homodimer.

The protein resides in the cytoplasm. It catalyses the reaction tRNA(His) + L-histidine + ATP = L-histidyl-tRNA(His) + AMP + diphosphate + H(+). The protein is Histidine--tRNA ligase of Sorangium cellulosum (strain So ce56) (Polyangium cellulosum (strain So ce56)).